Here is a 160-residue protein sequence, read N- to C-terminus: Transcription antitermination protein NusB (160 aa).

This sequence belongs to the NusB family.

Involved in transcription antitermination. Required for transcription of ribosomal RNA (rRNA) genes. Binds specifically to the boxA antiterminator sequence of the ribosomal RNA (rrn) operons. The polypeptide is Transcription antitermination protein NusB (Rhizobium etli (strain ATCC 51251 / DSM 11541 / JCM 21823 / NBRC 15573 / CFN 42)).